Reading from the N-terminus, the 92-residue chain is Small nuclear ribonucleoprotein E (92 aa).

One can recognise a Sm domain in the interval 18–92 (INLIFRYLQN…NITLLQSVSN (75 aa)).

The protein belongs to the snRNP Sm proteins family. In terms of assembly, core component of the spliceosomal U1, U2, U4 and U5 small nuclear ribonucleoproteins (snRNPs), the building blocks of the spliceosome. Most spliceosomal snRNPs contain a common set of Sm proteins, SNRPB, SNRPD1, SNRPD2, SNRPD3, SNRPE, SNRPF and SNRPG that assemble in a heptameric protein ring on the Sm site of the small nuclear RNA to form the core snRNP. Component of the U1 snRNP. The U1 snRNP is composed of the U1 snRNA and the 7 core Sm proteins SNRPB, SNRPD1, SNRPD2, SNRPD3, SNRPE, SNRPF and SNRPG, and at least three U1 snRNP-specific proteins SNRNP70/U1-70K, SNRPA/U1-A and SNRPC/U1-C. Component of the U4/U6-U5 tri-snRNP complex composed of the U4, U6 and U5 snRNAs and at least PRPF3, PRPF4, PRPF6, PRPF8, PRPF31, SNRNP200, TXNL4A, SNRNP40, SNRPB, SNRPD1, SNRPD2, SNRPD3, SNRPE, SNRPF, SNRPG, DDX23, CD2BP2, PPIH, SNU13, EFTUD2, SART1 and USP39, plus LSM2, LSM3, LSM4, LSM5, LSM6, LSM7 and LSM8. Component of the U7 snRNP complex, or U7 Sm protein core complex, that is composed of the U7 snRNA and at least LSM10, LSM11, SNRPB, SNRPD3, SNRPE, SNRPF and SNRPG; the complex does not contain SNRPD1 and SNRPD2. Component of the minor spliceosome, which splices U12-type introns. Part of the SMN-Sm complex that contains SMN1, GEMIN2/SIP1, DDX20/GEMIN3, GEMIN4, GEMIN5, GEMIN6, GEMIN7, GEMIN8, STRAP/UNRIP and the Sm proteins SNRPB, SNRPD1, SNRPD2, SNRPD3, SNRPE, SNRPF and SNRPG; catalyzes core snRNPs assembly. Forms a 6S pICln-Sm complex composed of CLNS1A/pICln, SNRPD1, SNRPD2, SNRPE, SNRPF and SNRPG; ring-like structure where CLNS1A/pICln mimics additional Sm proteins and which is unable to assemble into the core snRNP. Interacts with SMN1; the interaction is direct. Interacts with GEMIN2 (via N-terminus); the interaction is direct. Interacts with SNRPF; the interaction is direct. Interacts with SNRPG; the interaction is direct.

Its subcellular location is the cytoplasm. It localises to the cytosol. It is found in the nucleus. Plays a role in pre-mRNA splicing as a core component of the spliceosomal U1, U2, U4 and U5 small nuclear ribonucleoproteins (snRNPs), the building blocks of the spliceosome. Component of both the pre-catalytic spliceosome B complex and activated spliceosome C complexes. As a component of the minor spliceosome, involved in the splicing of U12-type introns in pre-mRNAs. As part of the U7 snRNP it is involved in histone 3'-end processing. This is Small nuclear ribonucleoprotein E (SNRPE) from Bos taurus (Bovine).